Consider the following 130-residue polypeptide: MEAILMIGVLALCVIFLLSGRNNKKKQEARELEDYLEDLNKRVVQRTQILSELNEVISNRSIDKTVNLSACEVAVLDLYEQSNIRIPSDIIEDLVNQRLQSEQEVLNYIETQRTYWKLENQKKLYRGSLK.

Residues 1–20 form a helical membrane-spanning segment; sequence MEAILMIGVLALCVIFLLSG. Positions 30–60 form a coiled coil; that stretch reads RELEDYLEDLNKRVVQRTQILSELNEVISNR. The DNA-binding stretch occupies residues 70–130; that stretch reads ACEVAVLDLY…QKKLYRGSLK (61 aa).

Belongs to the phi29likevirus gp16.7 family. As to quaternary structure, homodimer; homooligomer. Interacts with DNA; one dsDNA binding subunit is constituted by three p16.7. dimers.

Its subcellular location is the host cell membrane. In terms of biological role, binds to the long stretches of ssDNA of the viral DNA replication intermediates created during the protein-primed mechanism of replication of the viral genome and attaches the viral DNA to the membrane of the infected cells. Required for the redistribution of replicating viral DNA from the initial replication site to membrane-associated sites surrounding the nucleoid. Required for the second pull step of DNA ejection. This is DNA replication protein 16.7 (16.7) from Bacillus subtilis (Bacteriophage phi-29).